The following is a 510-amino-acid chain: ATP synthase subunit alpha (510 aa).

169-176 provides a ligand contact to ATP; the sequence is GDRQTGKT.

It belongs to the ATPase alpha/beta chains family. In terms of assembly, F-type ATPases have 2 components, CF(1) - the catalytic core - and CF(0) - the membrane proton channel. CF(1) has five subunits: alpha(3), beta(3), gamma(1), delta(1), epsilon(1). CF(0) has three main subunits: a(1), b(2) and c(9-12). The alpha and beta chains form an alternating ring which encloses part of the gamma chain. CF(1) is attached to CF(0) by a central stalk formed by the gamma and epsilon chains, while a peripheral stalk is formed by the delta and b chains.

It is found in the cell inner membrane. It carries out the reaction ATP + H2O + 4 H(+)(in) = ADP + phosphate + 5 H(+)(out). Produces ATP from ADP in the presence of a proton gradient across the membrane. The alpha chain is a regulatory subunit. The protein is ATP synthase subunit alpha of Rickettsia peacockii (strain Rustic).